A 361-amino-acid chain; its full sequence is Salt tolerance receptor-like cytoplasmic kinase 1 (361 aa).

3 S-palmitoyl cysteine lipidation sites follow: Cys5, Cys10, and Cys14. Residues 67–347 enclose the Protein kinase domain; the sequence is GFSSRVIGHG…RALQEKTSAL (281 aa). ATP is bound by residues 73-81 and Lys95; that span reads IGHGGFSTV. The active-site Proton acceptor is the Asp195.

This sequence belongs to the protein kinase superfamily. Ser/Thr protein kinase family. Self-interacts. Interacts with CATA, CATB and CATC at the plasma membrane. Post-translationally, palmitoylated. Palmotylation at Cys-5, Cys-10 and Cys-14 by DHHC9 is required for plasma membrane targeting and STRK1 function. In terms of processing, autophosphorylated. As to expression, accumulates in seeds. Mainly expressed in young roots, and, to a lower extent, in leaf veins, seedlings, stems, leaf sheath and young spikelet.

The protein localises to the cell membrane. It carries out the reaction L-seryl-[protein] + ATP = O-phospho-L-seryl-[protein] + ADP + H(+). The catalysed reaction is L-threonyl-[protein] + ATP = O-phospho-L-threonyl-[protein] + ADP + H(+). The enzyme catalyses L-tyrosyl-[protein] + ATP = O-phospho-L-tyrosyl-[protein] + ADP + H(+). Acts probably as a dual specificity protein kinase. Regulates hydrogen peroxide (H(2)O(2)) homeostasis and improves salt tolerance by phosphorylating tyrosine residues of CATC thus activating its catalase activity. Promotes growth at the seedling stage and prevents grain yield loss under salt stress conditions. The sequence is that of Salt tolerance receptor-like cytoplasmic kinase 1 from Oryza sativa subsp. japonica (Rice).